A 1022-amino-acid polypeptide reads, in one-letter code: Antigenic heat-stable 120 kDa protein (1022 aa).

2 disordered regions span residues 1–41 (MSKD…QTTT) and 355–403 (GQSK…PQSQ). Residues 19–34 (EYTEEQKQTLEQEQKE) show a composition bias toward basic and acidic residues. Polar residues-rich tracts occupy residues 355 to 380 (GQSKEQPLITPQQTTSSSVEPPQYKQ) and 387 to 403 (PTNQPLQPETSQMPQSQ).

The protein localises to the cytoplasm. This is Antigenic heat-stable 120 kDa protein (sca4) from Rickettsia conorii (strain ATCC VR-613 / Malish 7).